A 457-amino-acid polypeptide reads, in one-letter code: MKIHFVGIGGIGMSAVALHEFLNGNDVYGSNIEETERTAYLRKLGIPIFVPHSADNWYDPDLVIKTPAVRDDNPEIVRARMERVPVENRLHYFRDILKREKKEEFAVTGTDGKTTTTAMVAHVLKHLKKSPTVFLGGIMDSLEHGNYEKGNGPVVYELDESEEFFSEFSPNYLIITNARGDHLENYGNSLSRYRSAFEKISRNTDLVVTFAEDELTSHLGDVTFGVKKGTYTLEMRSASRAEQKAVVEKNGKRYLELKLKVPGFHNVLNALAVIALFDSLGYDLAPVLEALEEFRGVHRRFSIAFHDPETNIYVIDDYAHTPDEIRNLLQTAKEVFENEKIVVIFQPHRYTRLEREDGNFAKALQLADEVVVTEVYDAFEERKNGISGKMIWDSLKSLGKEAYFVEKLPELEKVIPVSENTVFLFVGAGDIIHSSRRFVERYQSSKSSPSRVLGSNK.

Residue 109-115 coordinates ATP; sequence GTDGKTT.

Belongs to the MurCDEF family.

It localises to the cytoplasm. It carries out the reaction UDP-N-acetyl-alpha-D-muramate + L-alanine + ATP = UDP-N-acetyl-alpha-D-muramoyl-L-alanine + ADP + phosphate + H(+). It participates in cell wall biogenesis; peptidoglycan biosynthesis. In terms of biological role, cell wall formation. The protein is UDP-N-acetylmuramate--L-alanine ligase of Thermotoga petrophila (strain ATCC BAA-488 / DSM 13995 / JCM 10881 / RKU-1).